A 132-amino-acid chain; its full sequence is Peptide methionine sulfoxide reductase MsrB (132 aa).

The region spanning 9-131 (DAQWRAELSP…NSASLSFHPK (123 aa)) is the MsrB domain. The Zn(2+) site is built by Cys-48, Cys-51, Cys-97, and Cys-100. Cys-120 (nucleophile) is an active-site residue.

This sequence belongs to the MsrB Met sulfoxide reductase family. Zn(2+) serves as cofactor.

It carries out the reaction L-methionyl-[protein] + [thioredoxin]-disulfide + H2O = L-methionyl-(R)-S-oxide-[protein] + [thioredoxin]-dithiol. This Thiobacillus denitrificans (strain ATCC 25259 / T1) protein is Peptide methionine sulfoxide reductase MsrB.